A 432-amino-acid polypeptide reads, in one-letter code: MNKVIVTGAQWGDEGKGRIVDLLAEAADCVVRFNGGHNAGHTLVVGGKTWKLALLPCGLLRGKLGVIGNGVVVDPQALLAEIDRIAAEGLAITPDTLAIADNATLLLPSHIALDAAQEAARAQAIGTTGRGIGPAFEDRAGRRAIRLADLADPAVLRERLAEALRYHNAVLAALGRPACELEPMLAALLEQARRILPYLRPAWKLLSEADEAGRRILFEGAQAMLLDVEHGTYPFVTSSGTGPAQAASGSGLGSAARGHALGVCKAYATRVGGGPFPTELDDAVGARLREKGGEYGTNTGRPRRCGWLDAALLRQSVRVGGMSSLALTKLDVLDGLDELRICTGYRVDGVLRDDYPAGLAERGRVAPVYETLPGWQESTRGARSLDALPEAARAYVRRIAELAGAPVSLISTGAERDDVIRLADPWMPASGG.

GTP-binding positions include 12–18 (GDEGKGR) and 40–42 (GHT). The active-site Proton acceptor is Asp-13. Mg(2+) contacts are provided by Asp-13 and Gly-40. IMP contacts are provided by residues 13–16 (DEGK), 38–41 (NAGH), Thr-128, Arg-142, Gln-222, Thr-237, and Arg-301. The active-site Proton donor is the His-41. Position 297–303 (297–303 (TNTGRPR)) interacts with substrate. Residues Arg-303, 329–331 (KLD), and 411–413 (STG) contribute to the GTP site.

It belongs to the adenylosuccinate synthetase family. In terms of assembly, homodimer. Mg(2+) is required as a cofactor.

Its subcellular location is the cytoplasm. It catalyses the reaction IMP + L-aspartate + GTP = N(6)-(1,2-dicarboxyethyl)-AMP + GDP + phosphate + 2 H(+). It functions in the pathway purine metabolism; AMP biosynthesis via de novo pathway; AMP from IMP: step 1/2. Plays an important role in the de novo pathway of purine nucleotide biosynthesis. Catalyzes the first committed step in the biosynthesis of AMP from IMP. This is Adenylosuccinate synthetase 1 from Chromobacterium violaceum (strain ATCC 12472 / DSM 30191 / JCM 1249 / CCUG 213 / NBRC 12614 / NCIMB 9131 / NCTC 9757 / MK).